The sequence spans 156 residues: 6,7-dimethyl-8-ribityllumazine synthase (156 aa).

5-amino-6-(D-ribitylamino)uracil-binding positions include Phe23, Ala57–Glu59, and Ala81–Ile83. Residue Gly86 to Thr87 participates in (2S)-2-hydroxy-3-oxobutyl phosphate binding. Catalysis depends on His89, which acts as the Proton donor. A 5-amino-6-(D-ribitylamino)uracil-binding site is contributed by Phe114. (2S)-2-hydroxy-3-oxobutyl phosphate is bound at residue Arg128.

The protein belongs to the DMRL synthase family.

It catalyses the reaction (2S)-2-hydroxy-3-oxobutyl phosphate + 5-amino-6-(D-ribitylamino)uracil = 6,7-dimethyl-8-(1-D-ribityl)lumazine + phosphate + 2 H2O + H(+). It participates in cofactor biosynthesis; riboflavin biosynthesis; riboflavin from 2-hydroxy-3-oxobutyl phosphate and 5-amino-6-(D-ribitylamino)uracil: step 1/2. Catalyzes the formation of 6,7-dimethyl-8-ribityllumazine by condensation of 5-amino-6-(D-ribitylamino)uracil with 3,4-dihydroxy-2-butanone 4-phosphate. This is the penultimate step in the biosynthesis of riboflavin. In Helicobacter pylori (strain J99 / ATCC 700824) (Campylobacter pylori J99), this protein is 6,7-dimethyl-8-ribityllumazine synthase.